The following is a 344-amino-acid chain: UDP-3-O-acylglucosamine N-acyltransferase (344 aa).

Catalysis depends on His-248, which acts as the Proton acceptor.

It belongs to the transferase hexapeptide repeat family. LpxD subfamily. Homotrimer.

It catalyses the reaction a UDP-3-O-[(3R)-3-hydroxyacyl]-alpha-D-glucosamine + a (3R)-hydroxyacyl-[ACP] = a UDP-2-N,3-O-bis[(3R)-3-hydroxyacyl]-alpha-D-glucosamine + holo-[ACP] + H(+). It functions in the pathway bacterial outer membrane biogenesis; LPS lipid A biosynthesis. Functionally, catalyzes the N-acylation of UDP-3-O-acylglucosamine using 3-hydroxyacyl-ACP as the acyl donor. Is involved in the biosynthesis of lipid A, a phosphorylated glycolipid that anchors the lipopolysaccharide to the outer membrane of the cell. The polypeptide is UDP-3-O-acylglucosamine N-acyltransferase (Prochlorococcus marinus (strain MIT 9515)).